A 251-amino-acid polypeptide reads, in one-letter code: 5'-nucleotidase SurE 1 (251 aa).

Residues Asp8, Asp9, Ser39, and Asn95 each coordinate a divalent metal cation.

It belongs to the SurE nucleotidase family. A divalent metal cation serves as cofactor.

It is found in the cytoplasm. It catalyses the reaction a ribonucleoside 5'-phosphate + H2O = a ribonucleoside + phosphate. Its function is as follows. Nucleotidase that shows phosphatase activity on nucleoside 5'-monophosphates. The protein is 5'-nucleotidase SurE 1 of Thermus thermophilus (strain ATCC BAA-163 / DSM 7039 / HB27).